Consider the following 281-residue polypeptide: MSKYSDAKELAGLTLGKKTDYANQYDPSLLQPVPRSLNRDDLQLGDELPFMGHDIWTLYELSWLNNKGLPQVAVGEVYIPATSANLIESKSFKLYLNSYNQTRFDSWEEVRQRLITDLSHCAGEAVEVAVNSVTHYTQQPIVTMEGECIDEQDIDISSYDFDDRLLEGAAGEEWVTETLHSHLLKSNCLITNQPDWGSVEIRYQGHKIDREKLLRYLVSFREHNEFHEQCVERIFTDLMKYCQPESLTVFARYTRRGGLDINPYRSTEQAKPDHNHRMARQ.

87–89 provides a ligand contact to substrate; sequence IES. 89–90 is an NADPH binding site; it reads SK. Cys-188 acts as the Thioimide intermediate in catalysis. Residue Asp-195 is the Proton donor of the active site. 227–228 is a substrate binding site; that stretch reads HE. 256–257 contributes to the NADPH binding site; the sequence is RG. Positions 261 to 281 are disordered; that stretch reads INPYRSTEQAKPDHNHRMARQ. Basic and acidic residues predominate over residues 268 to 281; the sequence is EQAKPDHNHRMARQ.

This sequence belongs to the GTP cyclohydrolase I family. QueF type 2 subfamily. As to quaternary structure, homodimer.

It localises to the cytoplasm. It carries out the reaction 7-aminomethyl-7-carbaguanine + 2 NADP(+) = 7-cyano-7-deazaguanine + 2 NADPH + 3 H(+). The protein operates within tRNA modification; tRNA-queuosine biosynthesis. Catalyzes the NADPH-dependent reduction of 7-cyano-7-deazaguanine (preQ0) to 7-aminomethyl-7-deazaguanine (preQ1). The polypeptide is NADPH-dependent 7-cyano-7-deazaguanine reductase (Vibrio vulnificus (strain YJ016)).